The sequence spans 497 residues: UDP-N-acetylmuramoyl-L-alanyl-D-glutamate--2,6-diaminopimelate ligase (497 aa).

Residue serine 32 coordinates UDP-N-acetyl-alpha-D-muramoyl-L-alanyl-D-glutamate. 113–119 (GTNGKTT) is an ATP binding site. Residues 155–156 (TT), serine 182, glutamine 188, and arginine 190 contribute to the UDP-N-acetyl-alpha-D-muramoyl-L-alanyl-D-glutamate site. An N6-carboxylysine modification is found at lysine 222. Residues arginine 385, 409-412 (DNPR), glycine 460, and glutamate 464 each bind meso-2,6-diaminopimelate. The Meso-diaminopimelate recognition motif motif lies at 409 to 412 (DNPR).

Belongs to the MurCDEF family. MurE subfamily. Mg(2+) serves as cofactor. Carboxylation is probably crucial for Mg(2+) binding and, consequently, for the gamma-phosphate positioning of ATP.

Its subcellular location is the cytoplasm. It catalyses the reaction UDP-N-acetyl-alpha-D-muramoyl-L-alanyl-D-glutamate + meso-2,6-diaminopimelate + ATP = UDP-N-acetyl-alpha-D-muramoyl-L-alanyl-gamma-D-glutamyl-meso-2,6-diaminopimelate + ADP + phosphate + H(+). It functions in the pathway cell wall biogenesis; peptidoglycan biosynthesis. Its function is as follows. Catalyzes the addition of meso-diaminopimelic acid to the nucleotide precursor UDP-N-acetylmuramoyl-L-alanyl-D-glutamate (UMAG) in the biosynthesis of bacterial cell-wall peptidoglycan. The sequence is that of UDP-N-acetylmuramoyl-L-alanyl-D-glutamate--2,6-diaminopimelate ligase from Thermosynechococcus vestitus (strain NIES-2133 / IAM M-273 / BP-1).